Reading from the N-terminus, the 247-residue chain is Centromere protein H (247 aa).

At Met-1 the chain carries N-acetylmethionine. Residues 1–14 (MEEQPQMQDADEPA) show a composition bias toward acidic residues. The segment at 1–34 (MEEQPQMQDADEPADSGGEGRAGGPPQVAGAQAA) is disordered. Ser-16 is modified (phosphoserine). A compositionally biased stretch (low complexity) spans 24-34 (GPPQVAGAQAA). Residues 47-192 (RAQTKQQLLE…KIDLDSMENS (146 aa)) adopt a coiled-coil conformation. Lys-67 participates in a covalent cross-link: Glycyl lysine isopeptide (Lys-Gly) (interchain with G-Cter in SUMO2). Thr-68 carries the phosphothreonine modification.

It belongs to the CENP-H/MCM16 family. Self-associates. Component of the CENPA-NAC complex, at least composed of CENPA, CENPC, CENPH, CENPM, CENPN, CENPT and CENPU. The CENPA-NAC complex interacts with the CENPA-CAD complex, composed of CENPI, CENPK, CENPL, CENPO, CENPP, CENPQ, CENPR and CENPS. Interacts directly with CENPK. Interacts with KIF2C and NDC80. Interacts with TRIM36.

Its subcellular location is the nucleus. It localises to the chromosome. The protein localises to the centromere. It is found in the kinetochore. Its function is as follows. Component of the CENPA-NAC (nucleosome-associated) complex, a complex that plays a central role in assembly of kinetochore proteins, mitotic progression and chromosome segregation. The CENPA-NAC complex recruits the CENPA-CAD (nucleosome distal) complex and may be involved in incorporation of newly synthesized CENPA into centromeres. Required for chromosome congression and efficiently align the chromosomes on a metaphase plate. The protein is Centromere protein H of Homo sapiens (Human).